Here is a 461-residue protein sequence, read N- to C-terminus: Putative long chain fatty acid-CoA ligase VraA (461 aa).

Belongs to the ATP-dependent AMP-binding enzyme family.

This chain is Putative long chain fatty acid-CoA ligase VraA (vraA), found in Staphylococcus haemolyticus (strain JCSC1435).